The primary structure comprises 251 residues: ATP synthase subunit a 2 (251 aa).

The next 5 membrane-spanning stretches (helical) occupy residues 35 to 55, 94 to 114, 133 to 153, 198 to 218, and 219 to 239; these read GQVFMASWVVIALLIIASLLA, LPFIGTLFLFIFVSNWSGSLI, INTTVALALLTSLAYFYAGLS, LVVAVLVFLVPLFVPLPLMAL, and GLFTSAIQALVFATLAGAYIH.

This sequence belongs to the ATPase A chain family. F-type ATPases have 2 components, CF(1) - the catalytic core - and CF(0) - the membrane proton channel. CF(1) has five subunits: alpha(3), beta(3), gamma(1), delta(1), epsilon(1). CF(0) has four main subunits: a, b, b' and c.

The protein localises to the cellular thylakoid membrane. Functionally, key component of the proton channel; it plays a direct role in the translocation of protons across the membrane. This Crocosphaera subtropica (strain ATCC 51142 / BH68) (Cyanothece sp. (strain ATCC 51142)) protein is ATP synthase subunit a 2.